The primary structure comprises 428 residues: Elongation factor 1-alpha (428 aa).

Residues 5 to 215 (KPHVNIVFIG…ALDQIPEPPK (211 aa)) form the tr-type G domain. The tract at residues 14–21 (GHVDHGKS) is G1. 14–21 (GHVDHGKS) provides a ligand contact to GTP. Position 21 (S21) interacts with Mg(2+). The G2 stretch occupies residues 68-72 (GITID). Residues 89–92 (DAPG) form a G3 region. Residues 89–93 (DAPGH) and 144–147 (NKMD) each bind GTP. Residues 144–147 (NKMD) form a G4 region. Residues 181 to 183 (SAW) form a G5 region.

It belongs to the TRAFAC class translation factor GTPase superfamily. Classic translation factor GTPase family. EF-Tu/EF-1A subfamily.

It localises to the cytoplasm. The catalysed reaction is GTP + H2O = GDP + phosphate + H(+). Functionally, GTP hydrolase that promotes the GTP-dependent binding of aminoacyl-tRNA to the A-site of ribosomes during protein biosynthesis. The chain is Elongation factor 1-alpha from Thermococcus kodakarensis (strain ATCC BAA-918 / JCM 12380 / KOD1) (Pyrococcus kodakaraensis (strain KOD1)).